We begin with the raw amino-acid sequence, 245 residues long: Acetylglutamate kinase (245 aa).

Residues 41–42 (GG), Arg-63, and Asn-156 contribute to the substrate site.

It belongs to the acetylglutamate kinase family. ArgB subfamily.

It localises to the cytoplasm. The catalysed reaction is N-acetyl-L-glutamate + ATP = N-acetyl-L-glutamyl 5-phosphate + ADP. It functions in the pathway amino-acid biosynthesis; L-arginine biosynthesis; N(2)-acetyl-L-ornithine from L-glutamate: step 2/4. In terms of biological role, catalyzes the ATP-dependent phosphorylation of N-acetyl-L-glutamate. This is Acetylglutamate kinase from Streptococcus sanguinis (strain SK36).